The following is a 346-amino-acid chain: Glycerol-3-phosphate dehydrogenase [NAD(P)+] (346 aa).

5 residues coordinate NADPH: Ser-11, Trp-12, His-32, Arg-33, and Lys-106. Residues Lys-106, Gly-137, and Ser-139 each contribute to the sn-glycerol 3-phosphate site. Position 141 (Ala-141) interacts with NADPH. Residues Lys-193, Asp-246, Ser-256, Arg-257, and Asn-258 each coordinate sn-glycerol 3-phosphate. Lys-193 serves as the catalytic Proton acceptor. Arg-257 lines the NADPH pocket. Residues Val-281 and Glu-283 each contribute to the NADPH site.

It belongs to the NAD-dependent glycerol-3-phosphate dehydrogenase family.

The protein resides in the cytoplasm. The enzyme catalyses sn-glycerol 3-phosphate + NAD(+) = dihydroxyacetone phosphate + NADH + H(+). The catalysed reaction is sn-glycerol 3-phosphate + NADP(+) = dihydroxyacetone phosphate + NADPH + H(+). Its pathway is membrane lipid metabolism; glycerophospholipid metabolism. In terms of biological role, catalyzes the reduction of the glycolytic intermediate dihydroxyacetone phosphate (DHAP) to sn-glycerol 3-phosphate (G3P), the key precursor for phospholipid synthesis. This chain is Glycerol-3-phosphate dehydrogenase [NAD(P)+], found in Bacillus licheniformis (strain ATCC 14580 / DSM 13 / JCM 2505 / CCUG 7422 / NBRC 12200 / NCIMB 9375 / NCTC 10341 / NRRL NRS-1264 / Gibson 46).